Consider the following 100-residue polypeptide: NAD(P)H-quinone oxidoreductase subunit 4L, chloroplastic (100 aa).

Transmembrane regions (helical) follow at residues Met1–Ile21, Met31–Phe51, and Ile60–Leu80.

Belongs to the complex I subunit 4L family. NDH is composed of at least 16 different subunits, 5 of which are encoded in the nucleus.

It localises to the plastid. The protein localises to the chloroplast thylakoid membrane. It carries out the reaction a plastoquinone + NADH + (n+1) H(+)(in) = a plastoquinol + NAD(+) + n H(+)(out). The enzyme catalyses a plastoquinone + NADPH + (n+1) H(+)(in) = a plastoquinol + NADP(+) + n H(+)(out). Its function is as follows. NDH shuttles electrons from NAD(P)H:plastoquinone, via FMN and iron-sulfur (Fe-S) centers, to quinones in the photosynthetic chain and possibly in a chloroplast respiratory chain. The immediate electron acceptor for the enzyme in this species is believed to be plastoquinone. Couples the redox reaction to proton translocation, and thus conserves the redox energy in a proton gradient. The polypeptide is NAD(P)H-quinone oxidoreductase subunit 4L, chloroplastic (Cucumis sativus (Cucumber)).